Consider the following 638-residue polypeptide: MPVKKYLLKCLHRLQKGPGYTYKELLVWYCNNTNTHGPKRIICEGPKKKAMWFLLTLLFACLVCWQWGVFIQTYLSWEVSVSLSMGFKTMNFPAVTVCNSSPFQYSKVKHLLKDLYKLMEAVLDKILAPKSSHTNTTSTLNFTIWNHTPLVLIDERNPDHPVVLNLFGDSHNSSNPAPGSTCNAQGCKVAMRLCSANGTVCTFRNFTSATQAVTEWYILQATNIFSQVLPQDLVGMGYAPDRIILACLFGTEPCSHRNFTPIFYPDYGNCYIFNWGMTEKALPSANPGTEFGLKLILDIGQEDYVPFLASTAGARLMLHEQRTYPFIREEGIYAMAGTETSIGVLLDKLQGKGEPYSPCTMNGSDVAIQNLYSDYNTTYSIQACLHSCFQDHMIHNCSCGHYLYPLPAGEKYCNNRDFPDWAYCYLSLQMSVVQRETCLSMCKESCNDTQYKMTISMADWPSEASEDWILHVLSQERDQSSNITLSRKGIVKLNIYFQEFNYRTIEESPANNIVWLLSNLGGQFGFWMGGSVLCLIEFGEIIIDFIWITVIKLVASCKGLRRRRPQAPYTGPPPTVAELVEAHTNFGFQPDTTSCRPNAEVYPDQQTLPIPGTPPPNYDSLRLQPLDTMESDSEVEAI.

Over 1-50 (MPVKKYLLKCLHRLQKGPGYTYKELLVWYCNNTNTHGPKRIICEGPKKKA) the chain is Cytoplasmic. The helical transmembrane segment at 51-71 (MWFLLTLLFACLVCWQWGVFI) threads the bilayer. Topologically, residues 72 to 530 (QTYLSWEVSV…GGQFGFWMGG (459 aa)) are extracellular. Disulfide bonds link Cys-98–Cys-270, Cys-182–Cys-187, Cys-194–Cys-201, Cys-247–Cys-254, Cys-359–Cys-446, Cys-384–Cys-442, Cys-388–Cys-438, Cys-397–Cys-424, and Cys-399–Cys-413. N-linked (GlcNAc...) asparagine glycans are attached at residues Asn-135 and Asn-141. A helical transmembrane segment spans residues 531-551 (SVLCLIEFGEIIIDFIWITVI). The Cytoplasmic portion of the chain corresponds to 552 to 638 (KLVASCKGLR…MESDSEVEAI (87 aa)). The interval 598-620 (NAEVYPDQQTLPIPGTPPPNYDS) is disordered. The PY motif; recruits WW domain-containing proteins and is thereby required for ubiquitination and inhibition of the channel by NEDD4 and NEDD4L signature appears at 614–618 (PPPNY). Ser-631 and Ser-633 each carry phosphoserine.

It belongs to the amiloride-sensitive sodium channel (TC 1.A.6) family. SCNN1B subfamily. Component of the heterotrimeric epithelial sodium channel (ENaC) composed of an alpha/SCNN1A, a beta/SCNN1B and a gamma/SCNN1G subunit. Interacts with WWP1 (via WW domains). Interacts with WWP2 (via WW domains). Interacts with the full-length immature form of PCSK9 (pro-PCSK9). Interacts (N-glycosylated) with BPIFA1; the interaction is direct and inhibits the proteolytic processing of SCNN1A and SCNN1G and the activation of ENaC. Post-translationally, ubiquitinated. Can be ubiquitinated at multiple sites and undergo monoubiquitination and polyubiquitination. Ubiquitination by NEDD4 or NEDD4L inhibits the ENaC channel through endocytosis, intracellular retention and degradation of its individual subunits. However, some studies could not confirm the ubiquitination of this subunit of the ENaC. N-glycosylated. N-glycosylation is required for interaction with BPIFA1. In terms of processing, phosphorylated on serine and threonine residues. Aldosterone and insulin increase the basal level of phosphorylation. Expressed in lung and epididymis. In the caput region of the epididymis, expressed at the luminal and basolateral surfaces of the ducts and in the smooth muscle coat. In the caudal region of the epididymis, expressed along the luminal border but not continuously, in the smooth muscle coat, in the interstitial muscle tissue and in sperm in the caudal lumen.

The protein localises to the apical cell membrane. It is found in the cytoplasmic vesicle membrane. It carries out the reaction Na(+)(in) = Na(+)(out). Its activity is regulated as follows. Originally identified and characterized by its inhibition by the diuretic drug amiloride. This is one of the three pore-forming subunits of the heterotrimeric epithelial sodium channel (ENaC), a critical regulator of sodium balance and fluid homeostasis. ENaC operates in epithelial tissues, where it mediates the electrodiffusion of sodium ions from extracellular fluid through the apical membrane of cells, with water following osmotically. It plays a key role in maintaining sodium homeostasis through electrogenic sodium reabsorption in the kidneys. This subunit is not essential for ENaC function in airway surface liquid homeostasis and proper mucus clearance. The protein is Epithelial sodium channel subunit beta of Rattus norvegicus (Rat).